A 236-amino-acid chain; its full sequence is Eukaryotic translation initiation factor 3 subunit J (236 aa).

The segment at methionine 1–alanine 86 is disordered. A compositionally biased stretch (acidic residues) spans glycine 28–lysine 46. 2 stretches are compositionally biased toward basic and acidic residues: residues aspartate 47–valine 58 and alanine 68–alanine 86. Residues lysine 61–threonine 115 adopt a coiled-coil conformation.

The protein belongs to the eIF-3 subunit J family. Component of the eukaryotic translation initiation factor 3 (eIF-3) complex. The eIF-3 complex interacts with pix.

It localises to the cytoplasm. Its function is as follows. Component of the eukaryotic translation initiation factor 3 (eIF-3) complex, which is involved in protein synthesis of a specialized repertoire of mRNAs and, together with other initiation factors, stimulates binding of mRNA and methionyl-tRNAi to the 40S ribosome. The eIF-3 complex specifically targets and initiates translation of a subset of mRNAs involved in cell proliferation. The polypeptide is Eukaryotic translation initiation factor 3 subunit J (Drosophila mojavensis (Fruit fly)).